A 118-amino-acid chain; its full sequence is Holo-[acyl-carrier-protein] synthase (118 aa).

Mg(2+) contacts are provided by Asp-5 and Glu-50.

This sequence belongs to the P-Pant transferase superfamily. AcpS family. It depends on Mg(2+) as a cofactor.

It localises to the cytoplasm. The catalysed reaction is apo-[ACP] + CoA = holo-[ACP] + adenosine 3',5'-bisphosphate + H(+). Functionally, transfers the 4'-phosphopantetheine moiety from coenzyme A to a Ser of acyl-carrier-protein. This Wolinella succinogenes (strain ATCC 29543 / DSM 1740 / CCUG 13145 / JCM 31913 / LMG 7466 / NCTC 11488 / FDC 602W) (Vibrio succinogenes) protein is Holo-[acyl-carrier-protein] synthase.